The sequence spans 162 residues: Peptidyl-prolyl cis-trans isomerase-like 1 (162 aa).

The 155-residue stretch at 1–155 (MATDVAFDTS…DGVKILRARI (155 aa)) folds into the PPIase cyclophilin-type domain.

Belongs to the cyclophilin-type PPIase family. PPIL1 subfamily.

The catalysed reaction is [protein]-peptidylproline (omega=180) = [protein]-peptidylproline (omega=0). Its function is as follows. PPIases accelerate the folding of proteins. It catalyzes the cis-trans isomerization of proline imidic peptide bonds in oligopeptides. In Aspergillus niger, this protein is Peptidyl-prolyl cis-trans isomerase-like 1 (cypC).